We begin with the raw amino-acid sequence, 389 residues long: Succinate--CoA ligase [ADP-forming] subunit beta (389 aa).

Residues Lys46, 53–55 (GRG), Glu99, Cys102, and Glu107 each bind ATP. 2 residues coordinate Mg(2+): Asn199 and Asp213. Residues Asn264 and 321–323 (GIV) contribute to the substrate site.

The protein belongs to the succinate/malate CoA ligase beta subunit family. In terms of assembly, heterotetramer of two alpha and two beta subunits. Mg(2+) serves as cofactor.

It catalyses the reaction succinate + ATP + CoA = succinyl-CoA + ADP + phosphate. The catalysed reaction is GTP + succinate + CoA = succinyl-CoA + GDP + phosphate. Its pathway is carbohydrate metabolism; tricarboxylic acid cycle; succinate from succinyl-CoA (ligase route): step 1/1. Its function is as follows. Succinyl-CoA synthetase functions in the citric acid cycle (TCA), coupling the hydrolysis of succinyl-CoA to the synthesis of either ATP or GTP and thus represents the only step of substrate-level phosphorylation in the TCA. The beta subunit provides nucleotide specificity of the enzyme and binds the substrate succinate, while the binding sites for coenzyme A and phosphate are found in the alpha subunit. This chain is Succinate--CoA ligase [ADP-forming] subunit beta, found in Haemophilus influenzae (strain PittEE).